Consider the following 335-residue polypeptide: Transmembrane protein 120B-B (335 aa).

The stretch at 1 to 39 (MSLQKCQEEWGELEKEFQQLQETHKVYKQKLEELSSLQN) forms a coiled coil. 6 helical membrane passes run 100–116 (SLYL…TLLS), 130–150 (FKLY…FVLH), 157–177 (VFNF…SILI), 193–213 (VSTF…YQMF), 268–288 (FLLP…MTLF), and 300–320 (QVFV…LTTL).

Belongs to the TMEM120 family.

Its subcellular location is the nucleus inner membrane. Necessary for efficient adipogenesis. Does not show ion channel activity. This is Transmembrane protein 120B-B (tmem120b-b) from Xenopus laevis (African clawed frog).